The following is a 354-amino-acid chain: Methionine import ATP-binding protein MetN (354 aa).

One can recognise an ABC transporter domain in the interval 8–250; that stretch reads LDHIDITFRQ…PKEALTQEFI (243 aa). 42–49 contributes to the ATP binding site; the sequence is GYSGAGKS.

It belongs to the ABC transporter superfamily. Methionine importer (TC 3.A.1.24) family. The complex is composed of two ATP-binding proteins (MetN), two transmembrane proteins (MetI) and a solute-binding protein (MetQ).

It localises to the cell membrane. It carries out the reaction L-methionine(out) + ATP + H2O = L-methionine(in) + ADP + phosphate + H(+). The catalysed reaction is D-methionine(out) + ATP + H2O = D-methionine(in) + ADP + phosphate + H(+). Functionally, part of the ABC transporter complex MetNIQ involved in methionine import. Responsible for energy coupling to the transport system. The sequence is that of Methionine import ATP-binding protein MetN from Streptococcus pyogenes serotype M2 (strain MGAS10270).